A 59-amino-acid chain; its full sequence is Chromatin protein Cren7 (59 aa).

Belongs to the Cren7 family. In terms of assembly, monomer. In terms of processing, methylated at multiple sites, to varying extents.

The protein localises to the chromosome. It localises to the cytoplasm. Functionally, a chromatin protein, binds double-stranded DNA without sequence specificity. Constrains negative DNA supercoils. In Pyrobaculum arsenaticum (strain DSM 13514 / JCM 11321 / PZ6), this protein is Chromatin protein Cren7.